A 138-amino-acid chain; its full sequence is MISLTDTQKIGMGLTGFGVFFLFFGMILFFDKALLAIGNVLFVAGLAFVIGLERTFRFFFQRHKVKATGFFLGGVFVVLIGWPLIGMIFEIYGFFLLFRGFFPVVVGFIRRVPVLGSLLNLPGIRSFVDKVGESNNMV.

N-acetylmethionine is present on M1. At 1-9 the chain is on the cytoplasmic side; that stretch reads MISLTDTQK. A helical membrane pass occupies residues 10-30; the sequence is IGMGLTGFGVFFLFFGMILFF. At 31–32 the chain is on the lumenal side; that stretch reads DK. A helical membrane pass occupies residues 33-53; that stretch reads ALLAIGNVLFVAGLAFVIGLE. The Cytoplasmic portion of the chain corresponds to 54-68; it reads RTFRFFFQRHKVKAT. A topological domain (lumenal) is located at residue E90. Residues 91–109 traverse the membrane as a helical segment; sequence IYGFFLLFRGFFPVVVGFI. Over 110–138 the chain is Cytoplasmic; sequence RRVPVLGSLLNLPGIRSFVDKVGESNNMV.

The protein belongs to the GOT1 family.

It is found in the golgi apparatus membrane. In terms of biological role, may be involved in fusion of ER-derived transport vesicles with the Golgi complex. This is Vesicle transport protein GOT1B (Golt1b) from Mus musculus (Mouse).